Here is a 613-residue protein sequence, read N- to C-terminus: Dihydroxy-acid dehydratase (613 aa).

Asp81 is a Mg(2+) binding site. Residue Cys122 participates in [2Fe-2S] cluster binding. Residues Asp123 and Lys124 each contribute to the Mg(2+) site. At Lys124 the chain carries N6-carboxylysine. Cys195 lines the [2Fe-2S] cluster pocket. Residue Glu491 participates in Mg(2+) binding. Ser517 functions as the Proton acceptor in the catalytic mechanism.

This sequence belongs to the IlvD/Edd family. As to quaternary structure, homodimer. Requires [2Fe-2S] cluster as cofactor. Mg(2+) serves as cofactor.

The enzyme catalyses (2R)-2,3-dihydroxy-3-methylbutanoate = 3-methyl-2-oxobutanoate + H2O. It catalyses the reaction (2R,3R)-2,3-dihydroxy-3-methylpentanoate = (S)-3-methyl-2-oxopentanoate + H2O. It participates in amino-acid biosynthesis; L-isoleucine biosynthesis; L-isoleucine from 2-oxobutanoate: step 3/4. It functions in the pathway amino-acid biosynthesis; L-valine biosynthesis; L-valine from pyruvate: step 3/4. Functions in the biosynthesis of branched-chain amino acids. Catalyzes the dehydration of (2R,3R)-2,3-dihydroxy-3-methylpentanoate (2,3-dihydroxy-3-methylvalerate) into 2-oxo-3-methylpentanoate (2-oxo-3-methylvalerate) and of (2R)-2,3-dihydroxy-3-methylbutanoate (2,3-dihydroxyisovalerate) into 2-oxo-3-methylbutanoate (2-oxoisovalerate), the penultimate precursor to L-isoleucine and L-valine, respectively. The polypeptide is Dihydroxy-acid dehydratase (Buchnera aphidicola subsp. Schlechtendalia chinensis).